A 243-amino-acid chain; its full sequence is Carboxy-S-adenosyl-L-methionine synthase (243 aa).

Residues Tyr-40, 65 to 67 (GSS), 90 to 91 (DN), 118 to 119 (DI), Asn-133, and Arg-200 each bind S-adenosyl-L-methionine.

It belongs to the class I-like SAM-binding methyltransferase superfamily. Cx-SAM synthase family. In terms of assembly, homodimer.

It catalyses the reaction prephenate + S-adenosyl-L-methionine = carboxy-S-adenosyl-L-methionine + 3-phenylpyruvate + H2O. Functionally, catalyzes the conversion of S-adenosyl-L-methionine (SAM) to carboxy-S-adenosyl-L-methionine (Cx-SAM). This Shewanella denitrificans (strain OS217 / ATCC BAA-1090 / DSM 15013) protein is Carboxy-S-adenosyl-L-methionine synthase.